A 410-amino-acid polypeptide reads, in one-letter code: MTYPDPTLFGHDPWWLILAKSLGVFVFLLLTVLAAILIERKILGRMQLRLGPNRVGPRGLLQSLADGIKLALKEGLVPAGVDKWIYLAAPVISVIPAFMAFAVIPLGPEVSVFGHRTALQLTDLPVAVLYILAVTSIGVYGIVLAGWASGSVYPLLGGLRSSAQVISYEIAMALSFVAVFIYAGTMSTSGIVAAQNDVWFIFLLLPSFLVYLTSMVGETNRAPFDLPEAEGELVGGFHTEYSSLKFAMFMLAEYVNMTTVSALATTLFLGGWHAPWPISIADGANSDWWPLLWFTAKVWLFLFFFMWLRATLPRMRYDQFMRLGWKLLIPVSLAWIAIVATTRAMQNQGYQGWVTALIGVAGVAAILASLLAWRALRARRRRTSHSPPAQSSDHGAFPVPPLPVKEPADA.

9 consecutive transmembrane segments (helical) span residues 16–36, 84–104, 124–144, 165–185, 198–218, 260–280, 288–308, 320–340, and 353–373; these read LILA…LAAI, WIYL…FAVI, LPVA…GIVL, VISY…YAGT, VWFI…MVGE, VSAL…PISI, WWPL…FMWL, FMRL…AIVA, and WVTA…LLAW. A disordered region spans residues 384–410; sequence SHSPPAQSSDHGAFPVPPLPVKEPADA.

The protein belongs to the complex I subunit 1 family. In terms of assembly, NDH-1 is composed of 14 different subunits. Subunits NuoA, H, J, K, L, M, N constitute the membrane sector of the complex.

Its subcellular location is the cell membrane. It carries out the reaction a quinone + NADH + 5 H(+)(in) = a quinol + NAD(+) + 4 H(+)(out). Functionally, NDH-1 shuttles electrons from NADH, via FMN and iron-sulfur (Fe-S) centers, to quinones in the respiratory chain. The immediate electron acceptor for the enzyme in this species is believed to be menaquinone. Couples the redox reaction to proton translocation (for every two electrons transferred, four hydrogen ions are translocated across the cytoplasmic membrane), and thus conserves the redox energy in a proton gradient. This Mycolicibacterium gilvum (strain PYR-GCK) (Mycobacterium gilvum (strain PYR-GCK)) protein is NADH-quinone oxidoreductase subunit H.